The sequence spans 200 residues: Superoxide dismutase [Mn] 1 (200 aa).

The Mn(2+) site is built by His29, His76, Asp158, and His162.

It belongs to the iron/manganese superoxide dismutase family. Homodimer or homotetramer. It depends on Mn(2+) as a cofactor.

The catalysed reaction is 2 superoxide + 2 H(+) = H2O2 + O2. Its activity is regulated as follows. Inhibited by hydrogen peroxide. Is resistant to cyanide and azide inhibition. Destroys superoxide anion radicals which are normally produced within the cells and which are toxic to biological systems. This chain is Superoxide dismutase [Mn] 1 (sod1), found in Halobacterium salinarum (strain ATCC 700922 / JCM 11081 / NRC-1) (Halobacterium halobium).